Consider the following 253-residue polypeptide: Methionine aminopeptidase (253 aa).

A substrate-binding site is contributed by His-78. Residues Asp-95, Asp-106, and His-169 each coordinate a divalent metal cation. His-176 is a binding site for substrate. A divalent metal cation-binding residues include Glu-206 and Glu-237.

The protein belongs to the peptidase M24A family. Methionine aminopeptidase type 1 subfamily. In terms of assembly, monomer. The cofactor is Co(2+). Zn(2+) is required as a cofactor. It depends on Mn(2+) as a cofactor. Requires Fe(2+) as cofactor.

It carries out the reaction Release of N-terminal amino acids, preferentially methionine, from peptides and arylamides.. Functionally, removes the N-terminal methionine from nascent proteins. The N-terminal methionine is often cleaved when the second residue in the primary sequence is small and uncharged (Met-Ala-, Cys, Gly, Pro, Ser, Thr, or Val). Requires deformylation of the N(alpha)-formylated initiator methionine before it can be hydrolyzed. This chain is Methionine aminopeptidase, found in Helicobacter pylori (strain J99 / ATCC 700824) (Campylobacter pylori J99).